Reading from the N-terminus, the 190-residue chain is High affinity copper uptake protein 1 (190 aa).

Positions M1–G35 are disordered. Over M1–L61 the chain is Extracellular. Residues H5–H6 carry the Bis-His motif motif. The Methionine segments (Mets) motif motif lies at M7–M12. N15 is a glycosylation site (N-linked (GlcNAc...) asparagine). A compositionally biased stretch (low complexity) spans T26 to G35. Residue T27 is glycosylated (O-linked (GalNAc...) threonine). Residues V62 to F82 form a helical membrane-spanning segment. Topologically, residues Y83–H132 are cytoplasmic. T114 carries the phosphothreonine modification. The helical transmembrane segment at L133–F153 threads the bilayer. At M154–Y156 the chain is on the extracellular side. Residues N157–W177 form a helical membrane-spanning segment. The Cytoplasmic portion of the chain corresponds to K178 to H190. C189 bears the Cysteine sulfenic acid (-SOH) mark.

This sequence belongs to the copper transporter (Ctr) (TC 1.A.56) family. SLC31A subfamily. As to quaternary structure, homotrimer; is stabilized by cisplatin via interactions between cisplatin and the methionine-rich clusters, and could be crucial for the copper(2+) reduction process and copper(1+) stabilization. Heterotrimer between SLC31A1, CCS and SOD1; this heterotrimer is copper(1+)-mediated and its maintenance is regulated through SOD1 activation. Interacts with KDR; this interaction is induced upon VEGFA stimulation leading to SLC31A1 and KDR subsequent co-internalization to early endosomes, thereby activating KDR downstream signaling in endothelial cells. Interacts (via C-terminal domain) with ATOX1 (via dimer form); this interaction improves ATOX1 stability and controls intracellular copper(1+) levels. Interacts with SLC31A2; this interaction stabilizes SLC31A2 and protects its from ubiquitination and degradation. Interacts (via C-terminal domain) with CCS; this interaction is copper(1+)-mediated. O-Glycosylation at Thr-27 protects from proteolytic cleavage in the N-terminal extracellular domain. Post-translationally, proteolytic cleavage, leading to a truncated form, is facilitated by SLC31A2 and initiated preferentially by CTSL and to a minor extend by CTSB in endolysosomal compartments. In vitro, is cleaved by CTSL/cathepsin L between residues 8 and 9 from the amino terminus. A post-CTSL/cathepsin L processing occurs to yield to the fully truncated form. In terms of processing, sulfenylated at Cys-189 after stimulation with VEGFA, which induces SLC31A1-KDR disulfide bond formation and their co-internalization to early endosomes, driving to a sustained VEGFR2 signaling.

The protein localises to the cell membrane. Its subcellular location is the early endosome membrane. The protein resides in the recycling endosome membrane. It localises to the apical cell membrane. It is found in the late endosome membrane. The protein localises to the basolateral cell membrane. It carries out the reaction Ag(+)(out) = Ag(+)(in). The catalysed reaction is Cu(+)(out) = Cu(+)(in). With respect to regulation, copper(1+) transport is stimulated by extracellular acidic pH and high potassium ions concentrations. Copper(1+) import is regulated by a copper(1+)-dependent recycling of SLC31A1. Functionally, uniporter that mediates the transport of copper(1+) from the extracellular space to the cytoplasm, across the plasma membrane and delivers directly copper(1+) to specific chaperone such as ATOX1, via a copper(1+)- mediated transient interaction between the C-terminal domain and a copper(1+) chaperone, thus controlling intracellular copper(1+) levels. May function in copper(1+) import from the apical membrane thus may drive intestinal copper absorption. The copper(1+) transport mechanism is sodium-independent, saturable and of high-affinity. Also mediates the uptake of silver(1+). May function in the influx of the platinum-containing chemotherapeutic agents. The platinum-containing chemotherapeutic agents uptake is saturable. In vitro, mediates the transport of cadmium(2+) into cells. Also participates in the first step of copper(2+) acquisition by cells through a direct transfer of copper(2+) from copper(2+) carriers in blood, such as ALB to the N-terminal domain of SLC31A1, leading to copper(2+) reduction and probably followed by copper(1+) stabilization. In addition, functions as a redox sensor to promote angiogenesis in endothelial cells, in a copper(1+) transport independent manner, by transmitting the VEGF-induced ROS signal through a sulfenylation at Cys-189 leadin g to a subsequent disulfide bond formation between SLC31A1 and KDR. The SLC31A1-KDR complex is then co-internalized to early endosomes, driving a sustained VEGFR2 signaling. Its function is as follows. Mobilizes copper(1+) out of the endosomal compartment, making copper(1+) available for export out of the cells. This chain is High affinity copper uptake protein 1, found in Homo sapiens (Human).